The primary structure comprises 369 residues: Trichocyst matrix protein T1-B (369 aa).

The first 16 residues, 1–16 (MYKLAVCTLLILSVTA), serve as a signal peptide directing secretion. The propeptide occupies 17 to 55 (IDVTNSVWTSHDQKAFAQIKQSGWGNFILNFGELHLQTG). The stretch at 56-180 (GILAELNTEI…AIDESLQLLS (125 aa)) forms a coiled coil. Residues 190-225 (IQKVQKNLTKIQQSLKRHSTFQTFIKTLLEIAVEAN) constitute a propeptide that is removed on maturation. Residues 262–354 (KDFEARVIQL…AHQALDLLNQ (93 aa)) adopt a coiled-coil conformation.

The protein belongs to the TMP family. Two components are produced by post-translational processing from the precursor peptide.

The protein localises to the trichocyst. Structural protein that crystallize inside the trichocyst matrix. This is Trichocyst matrix protein T1-B (T1B) from Paramecium tetraurelia.